We begin with the raw amino-acid sequence, 197 residues long: Peptide deformylase (197 aa).

Residues C106 and H148 each contribute to the Fe cation site. The active site involves E149. H152 contributes to the Fe cation binding site.

This sequence belongs to the polypeptide deformylase family. It depends on Fe(2+) as a cofactor.

The catalysed reaction is N-terminal N-formyl-L-methionyl-[peptide] + H2O = N-terminal L-methionyl-[peptide] + formate. In terms of biological role, removes the formyl group from the N-terminal Met of newly synthesized proteins. Requires at least a dipeptide for an efficient rate of reaction. N-terminal L-methionine is a prerequisite for activity but the enzyme has broad specificity at other positions. In Mycobacterium sp. (strain JLS), this protein is Peptide deformylase.